Consider the following 56-residue polypeptide: uncharacterized protein (56 aa).

This is an uncharacterized protein from Bacillus subtilis (strain 168).